Here is a 744-residue protein sequence, read N- to C-terminus: MAGRSMQAARCPTDELSLTNCAVVNEKDFQSGQHVIVRTSPNHRYTFTLKTHPSVVPGSIAFSLPQRKWAGLSIGQEIEVSLYTFDKAKQCIGTMTIEIDFLQKKSIDSNPYDTDKMAAEFIQQFNNQAFSVGQQLVFSFNEKLFGLLVKDIEAMDPSILKGEPATGKRQKIEVGLVVGNSQVAFEKAENSSLNLIGKAKTKENRQSIINPDWNFEKMGIGGLDKEFSDIFRRAFASRVFPPEIVEQMGCKHVKGILLYGPPGCGKTLLARQIGKMLNAREPKVVNGPEILNKYVGESEANIRKLFADAEEEQRRLGANSGLHIIIFDEIDAICKQRGSMAGSTGVHDTVVNQLLSKIDGVEQLNNILVIGMTNRPDLIDEALLRPGRLEVKMEIGLPDEKGRLQILHIHTARMRGHQLLSADVDIKELAMETKNFSGAELEGLVRAAQSTAMNRHIKASTKVEVDMEKAESLQVTRGDFLASLENDIKPAFGTNQEDYASYIMNGIIKWGDPVTRVLDDGELLVQQTKNSDRTPLVSVLLEGPPHSGKTALAAKIAEESNFPFIKICSPDKMIGFSETAKCQAMKKIFDDAYKSQLSCVVVDDIERLLDYVPIGPRFSNLVLQALLVLLKKAPPQGRKLLIIGTTSRKDVLQEMEMLNAFSTTIHVPNIATGEQLLEALELLGNFKDKERTTIAQQVKGKKVWIGIKKLLMLIEMSLQMDPEYRVRKFLALLREEGASPLDFD.

K105 is subject to N6-acetyllysine. S207 carries the phosphoserine modification. Phosphotyrosine is present on Y259. ATP-binding positions include 505–510 (NGIIKW) and 545–552 (PHSGKTAL). T550 contacts Mg(2+). At S569 the chain carries Phosphoserine; by CDK16.

The protein belongs to the AAA ATPase family. Homohexamer. Interacts with GABARAP and GABARAPL2. Interacts with GRIA2. Interacts with PLK2, leading to disrupt the interaction with GRIA2. Interacts with MUSK; may regulate MUSK endocytosis and activity. Interacts with CDK16. The cofactor is Mg(2+). Phosphorylation at Ser-569 interferes with homohexamerization.

The protein resides in the cytoplasm. The enzyme catalyses ATP + H2O = ADP + phosphate + H(+). Required for vesicle-mediated transport. Catalyzes the fusion of transport vesicles within the Golgi cisternae. Is also required for transport from the endoplasmic reticulum to the Golgi stack. Seems to function as a fusion protein required for the delivery of cargo proteins to all compartments of the Golgi stack independent of vesicle origin. Interaction with AMPAR subunit GRIA2 leads to influence GRIA2 membrane cycling. In Pongo abelii (Sumatran orangutan), this protein is Vesicle-fusing ATPase (NSF).